Reading from the N-terminus, the 57-residue chain is Small ribosomal subunit protein bS21 (57 aa).

This sequence belongs to the bacterial ribosomal protein bS21 family.

The chain is Small ribosomal subunit protein bS21 from Phytoplasma australiense.